The following is a 474-amino-acid chain: Magnesium transporter MRS2-A, chloroplastic (474 aa).

A chloroplast-targeting transit peptide spans 1–55; that stretch reads MASVSSSPSYSSQAAVLLLLHQPPHQHGHGGACLRYRGSQSQGRGNAVATSLGLS. The segment at 79–129 is disordered; the sequence is GKDGRAVTKDEEEEAAAAAVEEEGEVEVRREEDKPGDDGSREAAARGSGSG. A compositionally biased stretch (acidic residues) spans 88 to 103; that stretch reads DEEEEAAAAAVEEEGE. Residues 104-122 are compositionally biased toward basic and acidic residues; sequence VEVRREEDKPGDDGSREAA. 2 helical membrane passes run 412–432 and 444–464; these read LLLQ…GIFG and WAFW…FFIM. The Required for magnesium transport activity signature appears at 432–434; sequence GMN.

It belongs to the CorA metal ion transporter (MIT) (TC 1.A.35.5) family.

Its subcellular location is the plastid. The protein resides in the chloroplast membrane. Its function is as follows. Magnesium transporter that may mediate the influx of magnesium in chloroplast. The protein is Magnesium transporter MRS2-A, chloroplastic (MRS2-A) of Oryza sativa subsp. japonica (Rice).